A 297-amino-acid chain; its full sequence is Ribosomal RNA small subunit methyltransferase H (297 aa).

Residues 35-37 (GGH), aspartate 55, phenylalanine 82, aspartate 100, and glutamine 107 contribute to the S-adenosyl-L-methionine site.

It belongs to the methyltransferase superfamily. RsmH family.

The protein localises to the cytoplasm. The catalysed reaction is cytidine(1402) in 16S rRNA + S-adenosyl-L-methionine = N(4)-methylcytidine(1402) in 16S rRNA + S-adenosyl-L-homocysteine + H(+). Specifically methylates the N4 position of cytidine in position 1402 (C1402) of 16S rRNA. This chain is Ribosomal RNA small subunit methyltransferase H, found in Chlamydia caviae (strain ATCC VR-813 / DSM 19441 / 03DC25 / GPIC) (Chlamydophila caviae).